The primary structure comprises 398 residues: Small ribosomal subunit protein mS29 (398 aa).

Residues 1-21 (MMLKGITRLISRIHKLDPGRF) constitute a mitochondrion transit peptide. The interval 39-67 (QVPVESPRAISRTNENDPAKHGDQHEGQH) is disordered. The span at 52-66 (NENDPAKHGDQHEGQ) shows a compositional bias: basic and acidic residues. Residues M100 and 128-135 (GEKGTGKT) contribute to the GTP site. K175 and K207 each carry N6-acetyllysine.

This sequence belongs to the mitochondrion-specific ribosomal protein mS29 family. Component of the mitochondrial small ribosomal subunit (mt-SSU). Mature mammalian 55S mitochondrial ribosomes consist of a small (28S) and a large (39S) subunit. The 28S small subunit contains a 12S ribosomal RNA (12S mt-rRNA) and 30 different proteins. The 39S large subunit contains a 16S rRNA (16S mt-rRNA), a copy of mitochondrial valine transfer RNA (mt-tRNA(Val)), which plays an integral structural role, and 52 different proteins. Interacts with DELE1. Interacts with NOA1. As to expression, ubiquitous.

It is found in the mitochondrion. It carries out the reaction GTP + H2O = GDP + phosphate + H(+). In terms of biological role, as a component of the mitochondrial small ribosomal subunit, it plays a role in the translation of mitochondrial mRNAs. Involved in mediating interferon-gamma-induced cell death. Displays GTPase activity in vitro. This Homo sapiens (Human) protein is Small ribosomal subunit protein mS29.